Here is a 121-residue protein sequence, read N- to C-terminus: Dihydroneopterin aldolase (121 aa).

2 residues coordinate substrate: Glu-16 and Met-111.

This sequence belongs to the archaeal dihydroneopterin aldolase family. As to quaternary structure, homotetramer.

It carries out the reaction 7,8-dihydroneopterin = 6-hydroxymethyl-7,8-dihydropterin + glycolaldehyde. The protein operates within cofactor biosynthesis; 5,6,7,8-tetrahydromethanopterin biosynthesis. Functionally, catalyzes the conversion of 7,8-dihydroneopterin (H2Neo) to 6-hydroxymethyl-7,8-dihydropterin (6-HMD). The sequence is that of Dihydroneopterin aldolase from Methanopyrus kandleri (strain AV19 / DSM 6324 / JCM 9639 / NBRC 100938).